The primary structure comprises 895 residues: Probable inorganic carbon transporter subunit DabA 1 (895 aa).

4 residues coordinate Zn(2+): Cys-398, Asp-400, His-581, and Cys-596.

It belongs to the inorganic carbon transporter (TC 9.A.2) DabA family. In terms of assembly, forms a complex with DabB. Zn(2+) is required as a cofactor.

Its subcellular location is the cell inner membrane. Part of an energy-coupled inorganic carbon pump. This is Probable inorganic carbon transporter subunit DabA 1 from Rhodopirellula baltica (strain DSM 10527 / NCIMB 13988 / SH1).